We begin with the raw amino-acid sequence, 150 residues long: Protein-export protein SecB (150 aa).

This sequence belongs to the SecB family. In terms of assembly, homotetramer, a dimer of dimers. One homotetramer interacts with 1 SecA dimer.

Its subcellular location is the cytoplasm. Its function is as follows. One of the proteins required for the normal export of preproteins out of the cell cytoplasm. It is a molecular chaperone that binds to a subset of precursor proteins, maintaining them in a translocation-competent state. It also specifically binds to its receptor SecA. The polypeptide is Protein-export protein SecB (Psychrobacter cryohalolentis (strain ATCC BAA-1226 / DSM 17306 / VKM B-2378 / K5)).